A 170-amino-acid chain; its full sequence is Large ribosomal subunit protein uL10 (170 aa).

The protein belongs to the universal ribosomal protein uL10 family. In terms of assembly, part of the ribosomal stalk of the 50S ribosomal subunit. The N-terminus interacts with L11 and the large rRNA to form the base of the stalk. The C-terminus forms an elongated spine to which L12 dimers bind in a sequential fashion forming a multimeric L10(L12)X complex.

In terms of biological role, forms part of the ribosomal stalk, playing a central role in the interaction of the ribosome with GTP-bound translation factors. In Novosphingobium aromaticivorans (strain ATCC 700278 / DSM 12444 / CCUG 56034 / CIP 105152 / NBRC 16084 / F199), this protein is Large ribosomal subunit protein uL10.